A 206-amino-acid chain; its full sequence is Ribosomal RNA large subunit methyltransferase E (206 aa).

Residues Gly-54, Trp-56, Asp-76, Asp-94, and Asp-118 each coordinate S-adenosyl-L-methionine. Lys-158 serves as the catalytic Proton acceptor.

Belongs to the class I-like SAM-binding methyltransferase superfamily. RNA methyltransferase RlmE family.

It localises to the cytoplasm. The catalysed reaction is uridine(2552) in 23S rRNA + S-adenosyl-L-methionine = 2'-O-methyluridine(2552) in 23S rRNA + S-adenosyl-L-homocysteine + H(+). Specifically methylates the uridine in position 2552 of 23S rRNA at the 2'-O position of the ribose in the fully assembled 50S ribosomal subunit. This is Ribosomal RNA large subunit methyltransferase E from Methanosphaera stadtmanae (strain ATCC 43021 / DSM 3091 / JCM 11832 / MCB-3).